A 208-amino-acid polypeptide reads, in one-letter code: FMN-dependent NADH:quinone oxidoreductase 1 (208 aa).

The protein belongs to the azoreductase type 1 family. Homodimer. Requires FMN as cofactor.

It catalyses the reaction 2 a quinone + NADH + H(+) = 2 a 1,4-benzosemiquinone + NAD(+). The enzyme catalyses N,N-dimethyl-1,4-phenylenediamine + anthranilate + 2 NAD(+) = 2-(4-dimethylaminophenyl)diazenylbenzoate + 2 NADH + 2 H(+). Quinone reductase that provides resistance to thiol-specific stress caused by electrophilic quinones. Its function is as follows. Also exhibits azoreductase activity. Catalyzes the reductive cleavage of the azo bond in aromatic azo compounds to the corresponding amines. The sequence is that of FMN-dependent NADH:quinone oxidoreductase 1 from Bacillus licheniformis (strain ATCC 14580 / DSM 13 / JCM 2505 / CCUG 7422 / NBRC 12200 / NCIMB 9375 / NCTC 10341 / NRRL NRS-1264 / Gibson 46).